A 341-amino-acid chain; its full sequence is Phenylalanine--tRNA ligase alpha subunit (341 aa).

A Mg(2+)-binding site is contributed by glutamate 253.

The protein belongs to the class-II aminoacyl-tRNA synthetase family. Phe-tRNA synthetase alpha subunit type 1 subfamily. Tetramer of two alpha and two beta subunits. Mg(2+) is required as a cofactor.

Its subcellular location is the cytoplasm. The enzyme catalyses tRNA(Phe) + L-phenylalanine + ATP = L-phenylalanyl-tRNA(Phe) + AMP + diphosphate + H(+). In Methylococcus capsulatus (strain ATCC 33009 / NCIMB 11132 / Bath), this protein is Phenylalanine--tRNA ligase alpha subunit.